The primary structure comprises 498 residues: Cystathionine beta-synthase (498 aa).

Residues 1–25 form a disordered region; sequence MSAPEGPSKCTWTPNTTENTPHTTR. Residues 11 to 22 show a composition bias toward low complexity; it reads TWTPNTTENTPH. K73 is modified (N6-(pyridoxal phosphate)lysine). Residues N103, 210–214, and S302 each bind pyridoxal 5'-phosphate; that span reads GTGGT. CBS domains follow at residues 374–430 and 435–497; these read TLPK…KKAV and VSKV…SQQK.

The protein belongs to the cysteine synthase/cystathionine beta-synthase family. Pyridoxal 5'-phosphate is required as a cofactor.

The catalysed reaction is L-homocysteine + L-serine = L,L-cystathionine + H2O. It participates in amino-acid biosynthesis; L-cysteine biosynthesis; L-cysteine from L-homocysteine and L-serine: step 1/2. The chain is Cystathionine beta-synthase (cysB) from Dictyostelium discoideum (Social amoeba).